Reading from the N-terminus, the 295-residue chain is Acetyl-coenzyme A carboxylase carboxyl transferase subunit beta (295 aa).

Positions 1–20 are disordered; that stretch reads MSWLSKLMPSGIRTENTPAK. In terms of domain architecture, CoA carboxyltransferase N-terminal spans 28–295; sequence LWEKCSNCGS…QPHPQDADAA (268 aa). Residues cysteine 32, cysteine 35, cysteine 51, and cysteine 54 each contribute to the Zn(2+) site. The C4-type zinc finger occupies 32–54; that stretch reads CSNCGSALYGPELEENLEVCPKC.

Belongs to the AccD/PCCB family. In terms of assembly, acetyl-CoA carboxylase is a heterohexamer composed of biotin carboxyl carrier protein (AccB), biotin carboxylase (AccC) and two subunits each of ACCase subunit alpha (AccA) and ACCase subunit beta (AccD). Requires Zn(2+) as cofactor.

The protein resides in the cytoplasm. It carries out the reaction N(6)-carboxybiotinyl-L-lysyl-[protein] + acetyl-CoA = N(6)-biotinyl-L-lysyl-[protein] + malonyl-CoA. Its pathway is lipid metabolism; malonyl-CoA biosynthesis; malonyl-CoA from acetyl-CoA: step 1/1. Functionally, component of the acetyl coenzyme A carboxylase (ACC) complex. Biotin carboxylase (BC) catalyzes the carboxylation of biotin on its carrier protein (BCCP) and then the CO(2) group is transferred by the transcarboxylase to acetyl-CoA to form malonyl-CoA. This is Acetyl-coenzyme A carboxylase carboxyl transferase subunit beta from Xanthomonas euvesicatoria pv. vesicatoria (strain 85-10) (Xanthomonas campestris pv. vesicatoria).